The chain runs to 354 residues: Peptide chain release factor 1 (354 aa).

N5-methylglutamine is present on glutamine 233.

This sequence belongs to the prokaryotic/mitochondrial release factor family. In terms of processing, methylated by PrmC. Methylation increases the termination efficiency of RF1.

Its subcellular location is the cytoplasm. Functionally, peptide chain release factor 1 directs the termination of translation in response to the peptide chain termination codons UAG and UAA. The chain is Peptide chain release factor 1 from Clostridioides difficile (strain 630) (Peptoclostridium difficile).